The sequence spans 123 residues: Small ribosomal subunit protein uS13 (123 aa).

A disordered region spans residues Arg99–Lys123.

It belongs to the universal ribosomal protein uS13 family. As to quaternary structure, part of the 30S ribosomal subunit. Forms a loose heterodimer with protein S19. Forms two bridges to the 50S subunit in the 70S ribosome.

Its function is as follows. Located at the top of the head of the 30S subunit, it contacts several helices of the 16S rRNA. In the 70S ribosome it contacts the 23S rRNA (bridge B1a) and protein L5 of the 50S subunit (bridge B1b), connecting the 2 subunits; these bridges are implicated in subunit movement. Contacts the tRNAs in the A and P-sites. The chain is Small ribosomal subunit protein uS13 from Carboxydothermus hydrogenoformans (strain ATCC BAA-161 / DSM 6008 / Z-2901).